The primary structure comprises 414 residues: TBC domain-containing protein C1778.09 (414 aa).

A Rab-GAP TBC domain is found at 158 to 343 (GIPDCWRSIA…RIWDLLFLLG (186 aa)).

The protein resides in the cytoplasm. The protein localises to the nucleus. The chain is TBC domain-containing protein C1778.09 from Schizosaccharomyces pombe (strain 972 / ATCC 24843) (Fission yeast).